The following is a 119-amino-acid chain: UPF0344 protein lp_1373 (119 aa).

A run of 4 helical transmembrane segments spans residues 1–21 (MYLL…AIGL), 32–52 (FLIL…ALAI), 60–80 (WLTL…EVAF), and 92–112 (LVTL…GLHW).

Belongs to the UPF0344 family.

It localises to the cell membrane. The polypeptide is UPF0344 protein lp_1373 (Lactiplantibacillus plantarum (strain ATCC BAA-793 / NCIMB 8826 / WCFS1) (Lactobacillus plantarum)).